A 168-amino-acid chain; its full sequence is UPF0303 protein YE1367 (168 aa).

The protein belongs to the UPF0303 family.

The protein is UPF0303 protein YE1367 of Yersinia enterocolitica serotype O:8 / biotype 1B (strain NCTC 13174 / 8081).